The sequence spans 237 residues: Regulator of G-protein signaling 9-binding protein (237 aa).

The Cytoplasmic segment spans residues 1–212 (MAREECKALL…ERAGPCDPSK (212 aa)). The stretch at 30–54 (SADTQDLREELQKTRQKARELAVAT) forms a coiled coil. The tract at residues 153-202 (EVLQVGEMIDDMEMKVNVPRWTVQARQAAGAELLSGASAGASSAGGISVE) is SNARE-like. Residues 213 to 233 (ALAATVFSAVLLVAVALALCV) form a helical; Anchor for type IV membrane protein membrane-spanning segment. Over 234–237 (AKLS) the chain is Extracellular.

The protein belongs to the RGS7BP/RGS9BP family. In terms of assembly, specifically interacts with isoform RGS9-1 of RGS9. Interaction is decreased when RGS9-1 is phosphorylated at 'Ser-475'. Component of the RGS9-1-Gbeta5 complex composed of RGS9-1, Gbeta5 (GNB5) and RGS9BP. Predominantly expressed in photoreceptors of the retina. Weakly expressed in other areas of the central nervous system.

Its subcellular location is the membrane. Functionally, regulator of G protein-coupled receptor (GPCR) signaling in phototransduction. Participates in the recovery phase of visual transduction via its interaction with RGS9-1 isoform. Acts as a membrane-anchor that mediates the targeting of RGS9-1 to the photoreceptor outer segment, where phototransduction takes place. Enhances the ability of RGS9-1 to stimulate G protein GTPase activity, allowing the visual signal to be terminated on the physiologically time scale. It also controls the proteolytic stability of RGS9-1, probably by protecting it from degradation. The polypeptide is Regulator of G-protein signaling 9-binding protein (Rgs9bp) (Mus musculus (Mouse)).